The sequence spans 458 residues: Argininosuccinate lyase (458 aa).

This sequence belongs to the lyase 1 family. Argininosuccinate lyase subfamily.

It localises to the cytoplasm. It catalyses the reaction 2-(N(omega)-L-arginino)succinate = fumarate + L-arginine. It participates in amino-acid biosynthesis; L-arginine biosynthesis; L-arginine from L-ornithine and carbamoyl phosphate: step 3/3. The chain is Argininosuccinate lyase from Anoxybacillus flavithermus (strain DSM 21510 / WK1).